The sequence spans 248 residues: MAELDPFGAPAGAPGGPALGNGVAGAGEEDPAAAFLAQQESEIAGIENDEAFAILDGGAPGPQAHGEPPGGPDAVDGVMNGEYYQESNGPTDSYAAISEVDRLQSEPESIRKWREEQTERLEALDANSRKQEAEWKEKAVKELEEWYARQDEQLQKTKASNRVADEAFYKQPFADVIGYVTNINHPCYSLEQAAEEAFVNDIDESSPGTEWERVARLCDFNPKSSKQAKDVSRMRSVLISLKQAPLVH.

Residues 1 to 93 (MAELDPFGAP…YQESNGPTDS (93 aa)) are disordered. The span at 13–25 (APGGPALGNGVAG) shows a compositional bias: gly residues. Positions 100 to 162 (VDRLQSEPES…QLQKTKASNR (63 aa)) are involved in binding clathrin heavy chain. Phosphoserine occurs at positions 105 and 206. The residue at position 223 (K223) is an N6-acetyllysine. S236 bears the Phosphoserine mark. K242 is modified (N6-acetyllysine).

Belongs to the clathrin light chain family. In terms of assembly, clathrin coats are formed from molecules containing 3 heavy chains and 3 light chains. Interacts with CALY; the interaction stimulates clathrin self-assembly and clathrin-mediated endocytosis. Interacts with CKAP5 and TACC3 forming the TACC3/ch-TOG/clathrin complex located at spindle inter-microtubules bridges; the complex implicates clathrin triskelions.

The protein resides in the cytoplasmic vesicle membrane. The protein localises to the membrane. Its subcellular location is the coated pit. It is found in the cytoplasm. It localises to the cytoskeleton. The protein resides in the spindle. In terms of biological role, clathrin is the major protein of the polyhedral coat of coated pits and vesicles. Acts as a component of the TACC3/ch-TOG/clathrin complex proposed to contribute to stabilization of kinetochore fibers of the mitotic spindle by acting as inter-microtubule bridge. The protein is Clathrin light chain A (Clta) of Rattus norvegicus (Rat).